Here is a 1005-residue protein sequence, read N- to C-terminus: Translation initiation factor IF-2 (1005 aa).

Disordered stretches follow at residues 54–337 (KYVP…RRPQ) and 368–414 (PKPK…PTSV). A compositionally biased stretch (polar residues) spans 58–73 (SPSTHSMPPTRPTSHS). Over residues 75 to 86 (PLPPQPGKPQPK) the composition is skewed to pro residues. Polar residues predominate over residues 146–157 (GSNSPSHSESTP). Low complexity-rich tracts occupy residues 189 to 198 (PSPAAMAGRA) and 222 to 240 (VESA…PRAE). The segment covering 258 to 274 (PRSETSEDGARRGEKLV) has biased composition (basic and acidic residues). Over residues 392 to 401 (GGRKLSRRDR) the composition is skewed to basic residues. Residues 495 to 668 (RRPPVVTIMG…LLVSEVEDLY (174 aa)) enclose the tr-type G domain. Residues 504–511 (GHVDHGKT) form a G1 region. 504-511 (GHVDHGKT) contacts GTP. The G2 stretch occupies residues 529–533 (GITQH). A G3 region spans residues 554–557 (DTPG). GTP-binding positions include 554-558 (DTPGH) and 608-611 (NKID). The tract at residues 608–611 (NKID) is G4. The segment at 644-646 (SAI) is G5.

Belongs to the TRAFAC class translation factor GTPase superfamily. Classic translation factor GTPase family. IF-2 subfamily.

It is found in the cytoplasm. Its function is as follows. One of the essential components for the initiation of protein synthesis. Protects formylmethionyl-tRNA from spontaneous hydrolysis and promotes its binding to the 30S ribosomal subunits. Also involved in the hydrolysis of GTP during the formation of the 70S ribosomal complex. The sequence is that of Translation initiation factor IF-2 from Cyanothece sp. (strain PCC 7425 / ATCC 29141).